The sequence spans 227 residues: PKHD-type hydroxylase PHZ_c0292 (227 aa).

Positions 78 to 178 (VVFPPLFNRY…RVCSFFWIQS (101 aa)) constitute a Fe2OG dioxygenase domain. H96, D98, and H159 together coordinate Fe cation. Residue R169 participates in 2-oxoglutarate binding.

It depends on Fe(2+) as a cofactor. Requires L-ascorbate as cofactor.

This Phenylobacterium zucineum (strain HLK1) protein is PKHD-type hydroxylase PHZ_c0292.